We begin with the raw amino-acid sequence, 167 residues long: Probable chemoreceptor glutamine deamidase CheD (167 aa).

The protein belongs to the CheD family.

It carries out the reaction L-glutaminyl-[protein] + H2O = L-glutamyl-[protein] + NH4(+). Functionally, probably deamidates glutamine residues to glutamate on methyl-accepting chemotaxis receptors (MCPs), playing an important role in chemotaxis. The polypeptide is Probable chemoreceptor glutamine deamidase CheD (Natronomonas pharaonis (strain ATCC 35678 / DSM 2160 / CIP 103997 / JCM 8858 / NBRC 14720 / NCIMB 2260 / Gabara) (Halobacterium pharaonis)).